A 456-amino-acid polypeptide reads, in one-letter code: MINDDTIVAPATAPGEGGIGIVRLSGSGAEKLLLKFFSPRRFCERLDSHFLYYGKFTDETGKIVDEVMAVIMRKPRSYTREDVVEIHCHGGGLLVRSIIDVFLAAGARLARPGEFTLRAFLNGRIDLTQAEAVIDLIRSRSNLASDVALSQLEGRLAQQIGVFGQVIADLLAQVEAAIDFPEEDIELDDQQMLGASAGALIADMDRIIDTFESGRVLREGLRVLIFGKPNVGKSSLMNGLLGEARAIVTDIPGTTRDTIEEDLVLGGLPLRIVDTAGIRNTLDPVEEEGVRRARSKVESADLVLLVIDGSQEMGEDDLLALEFCRNREVLVVINKCDLATLPISSALDGLPYVRTSVLEKNGLDGLVSAIQERFVHNAHVAENRETVVLTQRRHRQALVKARQSLGRFRETLVQGMSPEFGAVELRDALDAVGEITGETTPDDILERIFTRFCIGK.

Residues arginine 23, glutamate 85, and arginine 124 each contribute to the (6S)-5-formyl-5,6,7,8-tetrahydrofolate site. In terms of domain architecture, TrmE-type G spans 220 to 375 (GLRVLIFGKP…LVSAIQERFV (156 aa)). K(+) is bound at residue asparagine 230. GTP-binding positions include 230 to 235 (NVGKSS), 249 to 255 (TDIPGTT), and 274 to 277 (DTAG). Serine 234 is a Mg(2+) binding site. K(+)-binding residues include threonine 249, isoleucine 251, and threonine 254. A Mg(2+)-binding site is contributed by threonine 255. Lysine 456 contributes to the (6S)-5-formyl-5,6,7,8-tetrahydrofolate binding site.

It belongs to the TRAFAC class TrmE-Era-EngA-EngB-Septin-like GTPase superfamily. TrmE GTPase family. In terms of assembly, homodimer. Heterotetramer of two MnmE and two MnmG subunits. K(+) serves as cofactor.

The protein localises to the cytoplasm. Its function is as follows. Exhibits a very high intrinsic GTPase hydrolysis rate. Involved in the addition of a carboxymethylaminomethyl (cmnm) group at the wobble position (U34) of certain tRNAs, forming tRNA-cmnm(5)s(2)U34. This Syntrophotalea carbinolica (strain DSM 2380 / NBRC 103641 / GraBd1) (Pelobacter carbinolicus) protein is tRNA modification GTPase MnmE.